A 378-amino-acid polypeptide reads, in one-letter code: Chaperone protein DnaJ (378 aa).

Residues 6-70 enclose the J domain; that stretch reads DYYDVLGVSR…QKRQQYDQFG (65 aa). The CR-type zinc finger occupies 137 to 219; sequence GKTSEISYSR…CHGKGVKTQK (83 aa). Zn(2+)-binding residues include Cys150, Cys153, Cys167, Cys170, Cys193, Cys196, Cys207, and Cys210. 4 CXXCXGXG motif repeats span residues 150-157, 167-174, 193-200, and 207-214; these read CEVCKGSG, CDKCGGSG, CDKCTGSG, and CHNCHGKG.

Belongs to the DnaJ family. Homodimer. Requires Zn(2+) as cofactor.

It is found in the cytoplasm. In terms of biological role, participates actively in the response to hyperosmotic and heat shock by preventing the aggregation of stress-denatured proteins and by disaggregating proteins, also in an autonomous, DnaK-independent fashion. Unfolded proteins bind initially to DnaJ; upon interaction with the DnaJ-bound protein, DnaK hydrolyzes its bound ATP, resulting in the formation of a stable complex. GrpE releases ADP from DnaK; ATP binding to DnaK triggers the release of the substrate protein, thus completing the reaction cycle. Several rounds of ATP-dependent interactions between DnaJ, DnaK and GrpE are required for fully efficient folding. Also involved, together with DnaK and GrpE, in the DNA replication of plasmids through activation of initiation proteins. This chain is Chaperone protein DnaJ, found in Lactobacillus delbrueckii subsp. bulgaricus (strain ATCC 11842 / DSM 20081 / BCRC 10696 / JCM 1002 / NBRC 13953 / NCIMB 11778 / NCTC 12712 / WDCM 00102 / Lb 14).